The following is a 225-amino-acid chain: Ribonuclease 3 (225 aa).

One can recognise an RNase III domain in the interval 7–129; it reads IPRLCRTLGY…IIGAVYLDSD (123 aa). Mg(2+) is bound at residue Glu-42. Asp-46 is a catalytic residue. Mg(2+) contacts are provided by Asp-115 and Glu-118. Residue Glu-118 is part of the active site. One can recognise a DRBM domain in the interval 155–225; sequence DPKTLLQELL…AAQALELIKR (71 aa).

The protein belongs to the ribonuclease III family. Homodimer. Mg(2+) is required as a cofactor.

The protein resides in the cytoplasm. The catalysed reaction is Endonucleolytic cleavage to 5'-phosphomonoester.. Its function is as follows. Digests double-stranded RNA. Involved in the processing of primary rRNA transcript to yield the immediate precursors to the large and small rRNAs (23S and 16S). Processes some mRNAs, and tRNAs when they are encoded in the rRNA operon. Processes pre-crRNA and tracrRNA of type II CRISPR loci if present in the organism. The protein is Ribonuclease 3 of Shewanella woodyi (strain ATCC 51908 / MS32).